A 408-amino-acid polypeptide reads, in one-letter code: Homogentisate geranylgeranyltransferase (408 aa).

The N-terminal 68 residues, 1–68 (MQATTAAAAA…SAISQATSPR (68 aa)), are a transit peptide targeting the chloroplast. Transmembrane regions (helical) follow at residues 122–142 (HTIFGTIIGITSVSLLPMKSI), 149–169 (VLKGYLEALAAALCMNIYVVG), 194–214 (SVATGVFLVVTFLIMSFSIGI), 217–237 (GSVPLMYALVVSFLLGSAYSI), 248–268 (ALLAASCILFVRAILVQLAFF), 286–306 (LVFATLFMCCFSAVIALFKDI), 329–349 (VYQLCISILLTAYLAATVVGA), 352–372 (THLLQKIITVSGHGLLALTLW), and 386–406 (VTSFYMFIWKLFYAEYFLIPF).

The protein belongs to the UbiA prenyltransferase family.

Its subcellular location is the plastid. The protein localises to the chloroplast membrane. The catalysed reaction is homogentisate + (2E,6E,10E)-geranylgeranyl diphosphate + H(+) = 6-geranylgeranyl-2-methylbenzene-1,4-diol + CO2 + diphosphate. It participates in cofactor biosynthesis; tocopherol biosynthesis. In terms of biological role, involved in the synthesis of tocotrienol (vitamin E). Catalyzes the condensation of homogentisate and geranylgeranyl diphosphate to form 2-methyl-6-geranylgeranylbenzoquinol. Possesses low activity with phytyl diphosphate as substrate. This Triticum aestivum (Wheat) protein is Homogentisate geranylgeranyltransferase.